Here is an 825-residue protein sequence, read N- to C-terminus: Endochitinase A1 (825 aa).

The N-terminal stretch at 1 to 22 is a signal peptide; it reads MVSSKLSFVATAVAALAPLASA. In terms of domain architecture, GH18 spans 29-338; the sequence is SNLAIYWGQG…DHMKDILLHC (310 aa). Glu174 acts as the Proton donor in catalysis. Disordered regions lie at residues 338–568, 680–736, and 750–792; these read CDPS…TTTA, PVTE…VSTS, and PLIL…YTQE. Over residues 344–554 the composition is skewed to low complexity; that stretch reads VTSSSAVPSS…STDESSTTVG (211 aa). An N-linked (GlcNAc...) asparagine glycan is attached at Asn559. Residues 701–712 show a composition bias toward polar residues; the sequence is EGSNPTQPSGAS. N-linked (GlcNAc...) asparagine glycosylation occurs at Asn717. Residues 772 to 792 are compositionally biased toward polar residues; sequence PSGQNSGSSSHVPIPPSYTQE. The GPI-anchor amidated glycine moiety is linked to residue Gly800. A propeptide spans 801 to 825 (removed in mature form); the sequence is AASRVTGLGHGLVLTVLTLSAFFVL.

The protein belongs to the glycosyl hydrolase 18 family. Chitinase class III subfamily. O-mannosylated by pmt4.

The protein resides in the cell membrane. It localises to the secreted. The protein localises to the cell wall. It catalyses the reaction Random endo-hydrolysis of N-acetyl-beta-D-glucosaminide (1-&gt;4)-beta-linkages in chitin and chitodextrins.. Its activity is regulated as follows. The cyclic peptide natural product argifin acts as a specific inhibitor. In terms of biological role, GPI-anchored chitinase involved in the degradation of chitin, a component of the cell walls of fungi and exoskeletal elements of some animals (including worms and arthropods). Required to reshape the cell wall at the sites where cell wall remodeling and/or cell wall maturation actively take place such as sites of conidia formation. The polypeptide is Endochitinase A1 (chiA1) (Aspergillus fumigatus (Neosartorya fumigata)).